The primary structure comprises 2890 residues: Bifunctional DNA-directed RNA polymerase subunit beta-beta' (2890 aa).

The segment at Met1–Asp1377 is DNA-directed RNA polymerase subunit beta. A DNA-directed RNA polymerase subunit beta' region spans residues Pro1384–Phe2890. Zn(2+)-binding residues include Cys1449, Cys1451, Cys1465, and Cys1468. The Mg(2+) site is built by Asp1849, Asp1851, and Asp1853. Zn(2+)-binding residues include Cys2179, Cys2253, Cys2260, and Cys2263.

In the N-terminal section; belongs to the RNA polymerase beta chain family. The protein in the C-terminal section; belongs to the RNA polymerase beta' chain family. The RNAP catalytic core consists of 2 alpha, 1 beta/beta' and 1 omega subunit. When a sigma factor is associated with the core the holoenzyme is formed, which can initiate transcription. Mg(2+) is required as a cofactor. Zn(2+) serves as cofactor.

It carries out the reaction RNA(n) + a ribonucleoside 5'-triphosphate = RNA(n+1) + diphosphate. In terms of biological role, DNA-dependent RNA polymerase catalyzes the transcription of DNA into RNA using the four ribonucleoside triphosphates as substrates. In Helicobacter pylori (strain J99 / ATCC 700824) (Campylobacter pylori J99), this protein is Bifunctional DNA-directed RNA polymerase subunit beta-beta' (rpoBC).